The following is a 276-amino-acid chain: Formamidopyrimidine-DNA glycosylase (276 aa).

The active-site Schiff-base intermediate with DNA is the P2. E3 (proton donor) is an active-site residue. K58 (proton donor; for beta-elimination activity) is an active-site residue. DNA is bound by residues H92, R111, and K154. An FPG-type zinc finger spans residues 239–273 (QVYGHVGEECPRCGNIFEKIKVSGRGTTFCPHCQV). The Proton donor; for delta-elimination activity role is filled by R263.

The protein belongs to the FPG family. As to quaternary structure, monomer. Requires Zn(2+) as cofactor.

It carries out the reaction Hydrolysis of DNA containing ring-opened 7-methylguanine residues, releasing 2,6-diamino-4-hydroxy-5-(N-methyl)formamidopyrimidine.. It catalyses the reaction 2'-deoxyribonucleotide-(2'-deoxyribose 5'-phosphate)-2'-deoxyribonucleotide-DNA = a 3'-end 2'-deoxyribonucleotide-(2,3-dehydro-2,3-deoxyribose 5'-phosphate)-DNA + a 5'-end 5'-phospho-2'-deoxyribonucleoside-DNA + H(+). Involved in base excision repair of DNA damaged by oxidation or by mutagenic agents. Acts as a DNA glycosylase that recognizes and removes damaged bases. Has a preference for oxidized purines, such as 7,8-dihydro-8-oxoguanine (8-oxoG). Has AP (apurinic/apyrimidinic) lyase activity and introduces nicks in the DNA strand. Cleaves the DNA backbone by beta-delta elimination to generate a single-strand break at the site of the removed base with both 3'- and 5'-phosphates. This is Formamidopyrimidine-DNA glycosylase from Lactobacillus acidophilus (strain ATCC 700396 / NCK56 / N2 / NCFM).